The chain runs to 700 residues: Inhibitor of carbonic anhydrase (700 aa).

Positions 1–19 (MRLLICALLCLGTLGLCLA) are cleaved as a signal peptide. Transferrin-like domains lie at 25–347 (IRWC…NLKR) and 355–685 (VKWC…NFRQ). Intrachain disulfides connect Cys-28–Cys-67, Cys-38–Cys-58, Cys-137–Cys-213, Cys-172–Cys-188, Cys-175–Cys-198, Cys-185–Cys-196, Cys-246–Cys-260, Cys-358–Cys-390, Cys-368–Cys-381, Cys-415–Cys-695, Cys-438–Cys-658, Cys-470–Cys-545, Cys-494–Cys-686, Cys-504–Cys-518, Cys-515–Cys-528, and Cys-585–Cys-599. N-linked (GlcNAc...) asparagine glycosylation is present at Asn-664.

Belongs to the transferrin family. Monomer. Interacts (via transferrin-like domain 2) with CA2. In terms of processing, N-glycosylated. As to expression, detected in blood plasma, heart, kidney, liver, colon, lung, spleen, pancreas and testis (at protein level).

Its subcellular location is the secreted. Inhibitor for carbonic anhydrase 2 (CA2). Does not bind iron ions. This chain is Inhibitor of carbonic anhydrase, found in Mus musculus (Mouse).